The primary structure comprises 134 residues: uncharacterized protein (134 aa).

This is an uncharacterized protein from Synechococcus elongatus (strain ATCC 33912 / PCC 7942 / FACHB-805) (Anacystis nidulans R2).